We begin with the raw amino-acid sequence, 200 residues long: Early E1A 21 kDa protein (200 aa).

Residues 78–98 (QDSTTATSAEEPSASTDSISS) are disordered. Residues 114–118 (LRCYE) carry the LXCXE motif, interaction with host RB1 motif. The segment at 136–151 (CSTCGGHEVNGFCSLC) is a zinc-finger region. Positions 196–200 (SRHDE) match the Nuclear localization signal motif.

As to quaternary structure, interaction with host RB1 induces the aberrant dissociation of RB1-E2F1 complex thereby disrupting RB1's activity.

E1A protein has both transforming and trans-activating activities. Plays a role in viral genome replication by driving entry of quiescent cells into the cell cycle. Disrupts the function of host retinoblastoma protein RB1/pRb and isoform early E1A 26 kDa protein stabilizes TP53, which are key regulators of the cell cycle. Induces the disassembly of the E2F1 transcription factors from RB1 by direct competition for the same binding site on RB1, with subsequent transcriptional activation of E2F1-regulated S-phase genes. Inactivation of the ability of RB1 to arrest the cell cycle is critical for cellular transformation, uncontrolled cellular growth and proliferation induced by viral infection. Stimulation of progression from G1 to S phase allows the virus to efficiently use the cellular DNA replicating machinery to achieve viral genome replication. This chain is Early E1A 21 kDa protein, found in Murine adenovirus A serotype 1 (MAdV-1).